Here is a 163-residue protein sequence, read N- to C-terminus: Oocyte-secreted protein 1 (163 aa).

Residues 1–21 (MKPSSGLRGLLVLFSLTWTCA) form the signal peptide.

This sequence belongs to the PLAC1 family. Oocyte-specific.

The protein resides in the secreted. May be involved in cell differentiation. In Bos taurus (Bovine), this protein is Oocyte-secreted protein 1 (OOSP1).